A 110-amino-acid polypeptide reads, in one-letter code: U1-lycotoxin-Ls1kk (110 aa).

The signal sequence occupies residues 1–20 (MKFVLLFGVLLVTLFSYSSA). Residues 21–44 (EMFDDFDQADEDELLSLIEKEEAR) constitute a propeptide that is removed on maturation. Cystine bridges form between cysteine 47-cysteine 62, cysteine 54-cysteine 71, cysteine 61-cysteine 89, and cysteine 73-cysteine 87.

This sequence belongs to the neurotoxin 19 (CSTX) family. 03 subfamily. In terms of tissue distribution, expressed by the venom gland.

Its subcellular location is the secreted. The protein is U1-lycotoxin-Ls1kk of Lycosa singoriensis (Wolf spider).